The chain runs to 225 residues: tRNA (guanine-N(1)-)-methyltransferase (225 aa).

Residues Gly-110 and Val-130 to Leu-135 contribute to the S-adenosyl-L-methionine site.

The protein belongs to the RNA methyltransferase TrmD family. Homodimer.

It localises to the cytoplasm. It catalyses the reaction guanosine(37) in tRNA + S-adenosyl-L-methionine = N(1)-methylguanosine(37) in tRNA + S-adenosyl-L-homocysteine + H(+). Functionally, specifically methylates guanosine-37 in various tRNAs. The polypeptide is tRNA (guanine-N(1)-)-methyltransferase (Neorickettsia sennetsu (strain ATCC VR-367 / Miyayama) (Ehrlichia sennetsu)).